We begin with the raw amino-acid sequence, 481 residues long: Glutamyl-tRNA(Gln) amidotransferase subunit A (481 aa).

Active-site charge relay system residues include K74 and S149. S173 serves as the catalytic Acyl-ester intermediate.

Belongs to the amidase family. GatA subfamily. As to quaternary structure, heterotrimer of A, B and C subunits.

It catalyses the reaction L-glutamyl-tRNA(Gln) + L-glutamine + ATP + H2O = L-glutaminyl-tRNA(Gln) + L-glutamate + ADP + phosphate + H(+). Its function is as follows. Allows the formation of correctly charged Gln-tRNA(Gln) through the transamidation of misacylated Glu-tRNA(Gln) in organisms which lack glutaminyl-tRNA synthetase. The reaction takes place in the presence of glutamine and ATP through an activated gamma-phospho-Glu-tRNA(Gln). The chain is Glutamyl-tRNA(Gln) amidotransferase subunit A from Francisella tularensis subsp. mediasiatica (strain FSC147).